Here is a 461-residue protein sequence, read N- to C-terminus: MGTIHLFRKPQRSFFGKLLREFRLVAADRRSWKILLFGVINLICTGFLLMWCSSTNSIALTAYTYLTIFDLFSLMTCLISYWVTLRKPSPVYSFGFERLEVLAVFASTVLAQLGALFILKESAERFLEQPEIHTGRLLVGTFVALCFNLFTMLSIRNKPFAYVSEAASTSWLQEHVADLSRSLCGIIPGLSSIFLPRMNPFVLIDLAGAFALCITYMLIEINNYFAVDTASAIAIALMTFGTMYPMSVYSGKVLLQTTPPHVIGQLDKLIREVSTLDGVLEVRNEHFWTLGFGSLAGSVHVRIRRDANEQMVLAHVTNRLYTLVSTLTVQIFKDDWIRPALLSGPVAANVLNFSDHHVIPMPLLKGTDDLNPVTSTPAKPSSPPPEFSFNTPGKNVNPVILLNTQTRPYGFGLNHGHTPYSSMLNQGLGVPGIGATQGLRTGFTNIPSRYGTNNRIGQPRP.

The Cytoplasmic portion of the chain corresponds to 1 to 33 (MGTIHLFRKPQRSFFGKLLREFRLVAADRRSWK). The helical transmembrane segment at 34 to 54 (ILLFGVINLICTGFLLMWCSS) threads the bilayer. The Extracellular segment spans residues 55–64 (TNSIALTAYT). The helical transmembrane segment at 65 to 85 (YLTIFDLFSLMTCLISYWVTL) threads the bilayer. The Cytoplasmic segment spans residues 86-98 (RKPSPVYSFGFER). The chain crosses the membrane as a helical span at residues 99-119 (LEVLAVFASTVLAQLGALFIL). Topologically, residues 120–134 (KESAERFLEQPEIHT) are extracellular. A helical membrane pass occupies residues 135–155 (GRLLVGTFVALCFNLFTMLSI). At 156 to 200 (RNKPFAYVSEAASTSWLQEHVADLSRSLCGIIPGLSSIFLPRMNP) the chain is on the cytoplasmic side. Residues 201 to 221 (FVLIDLAGAFALCITYMLIEI) form a helical membrane-spanning segment. The Extracellular segment spans residues 222 to 223 (NN). A helical membrane pass occupies residues 224–244 (YFAVDTASAIAIALMTFGTMY). Residues 245–461 (PMSVYSGKVL…TNNRIGQPRP (217 aa)) lie on the Cytoplasmic side of the membrane. The tract at residues 371 to 392 (NPVTSTPAKPSSPPPEFSFNTP) is disordered.

This sequence belongs to the cation diffusion facilitator (CDF) transporter (TC 2.A.4) family. SLC30A subfamily. In terms of assembly, heterodimer with SLC30A5; form a functional zinc ion transmembrane transporter. In terms of tissue distribution, expressed in brain; especially in cerebellum, hippocampus, parahippocampal gyrus, superior and middle temporal gyrus. Also expressed in B-cells, colon, eye, and lung. Lower expression was present in bone, brain, cervix, ear, heart, kidney, muscle, nerve, pancreas, prostate, skin, stomach, and testis.

It localises to the golgi apparatus. The protein resides in the trans-Golgi network membrane. Functionally, has probably no intrinsic transporter activity but together with SLC30A5 forms a functional zinc ion:proton antiporter heterodimer, mediating zinc entry into the lumen of organelles along the secretory pathway. As part of that zinc ion:proton antiporter, contributes to zinc ion homeostasis within the early secretory pathway and regulates the activation and folding of enzymes like alkaline phosphatases and enzymes involved in phosphatidylinositol glycan anchor biosynthesis. The sequence is that of Zinc transporter 6 from Homo sapiens (Human).